Here is a 548-residue protein sequence, read N- to C-terminus: Transcriptional adapter ADA2a (548 aa).

Positions 1–30 (MGRSKLASRPAEEDLNPGKSKRKKISLGPE) are disordered. The segment at 48–104 (PGLYCCNYCDKDLSGLVRFKCAVCMDFDLCVECFSVGVELNRHKNSHPYRVMDNLSF) adopts a ZZ-type zinc-finger fold. Positions 53, 56, 68, 71, 77, 80, 90, and 94 each coordinate Zn(2+). The SANT domain maps to 106 to 158 (LVTSDWNADEEILLLEAIATYGFGNWKEVADHVGSKTTTECIKHFNSAYMQSP). Position 257 is an N6-acetyllysine; by GCN5 (lysine 257). Residues 365 to 386 (QSKEEHKELIKKVIEEHQILRR) adopt a coiled-coil conformation. Residues 461–548 (PRIYSGLDTW…LVHKGIGDST (88 aa)) enclose the SWIRM domain.

In terms of assembly, interacts in vitro with the HAT domain of GCN5 and with the DNA-binding domain of the transcriptional activator DREB1B/CBF1. Acetylated in vitro by GCN5, but acetylation is not essential for biological activity. As to expression, expressed in roots and leaves.

It is found in the nucleus. In terms of biological role, required for the function of some acidic activation domains, which activate transcription from a distant site. The exact mechanism of action is not yet known. ADA2 stimulates the acetyltransferase activity of GCN5 on free histones or nucleosomes, probably by opening up the promoter region. The protein is Transcriptional adapter ADA2a (ADA2A) of Arabidopsis thaliana (Mouse-ear cress).